Reading from the N-terminus, the 263-residue chain is 4-hydroxy-tetrahydrodipicolinate reductase (263 aa).

10–15 (GASGKM) contributes to the NAD(+) binding site. NADP(+) is bound at residue Arg-38. NAD(+)-binding positions include 97 to 99 (GTT) and 123 to 126 (APNF). The active-site Proton donor/acceptor is His-153. His-154 provides a ligand contact to (S)-2,3,4,5-tetrahydrodipicolinate. The active-site Proton donor is the Lys-157. Residue 163–164 (GT) participates in (S)-2,3,4,5-tetrahydrodipicolinate binding.

It belongs to the DapB family.

It is found in the cytoplasm. The catalysed reaction is (S)-2,3,4,5-tetrahydrodipicolinate + NAD(+) + H2O = (2S,4S)-4-hydroxy-2,3,4,5-tetrahydrodipicolinate + NADH + H(+). It carries out the reaction (S)-2,3,4,5-tetrahydrodipicolinate + NADP(+) + H2O = (2S,4S)-4-hydroxy-2,3,4,5-tetrahydrodipicolinate + NADPH + H(+). The protein operates within amino-acid biosynthesis; L-lysine biosynthesis via DAP pathway; (S)-tetrahydrodipicolinate from L-aspartate: step 4/4. In terms of biological role, catalyzes the conversion of 4-hydroxy-tetrahydrodipicolinate (HTPA) to tetrahydrodipicolinate. This Dehalococcoides mccartyi (strain ATCC BAA-2266 / KCTC 15142 / 195) (Dehalococcoides ethenogenes (strain 195)) protein is 4-hydroxy-tetrahydrodipicolinate reductase.